Reading from the N-terminus, the 571-residue chain is FAD-binding monooxygenase VdtE (571 aa).

Residues 44-47, 56-57, and Y62 contribute to the FAD site; these read VWYW and DS. Residue 54-56 coordinates NADP(+); sequence RVD. NADP(+) contacts are provided by residues 187–193 and 210–211; these read TGASAVQ and RT.

The protein belongs to the FAD-binding monooxygenase family. FAD is required as a cofactor.

The catalysed reaction is 9,10-dihydroxy-7-methoxy-3-(2-oxopropyl)-1H-benzo[g]isochromen-1-one + NADPH + O2 + H(+) = methyl 2-[(3S)-9,10-dihydroxy-7-methoxy-1-oxo-1H,3H,4H-naphtho[2,3-c]pyran-3-yl]acetate + NADP(+) + H2O. It carries out the reaction (3S)-9,10-dihydroxy-7-methoxy-3-(2-oxopropyl)-1H,3H,4H-naphtho[2,3-c]pyran-1-one + NADPH + O2 + H(+) = semiviriditoxin + NADP(+) + H2O. It functions in the pathway secondary metabolite biosynthesis. In terms of biological role, FAD-binding monooxygenase; part of the gene cluster that mediates the biosynthesis of viriditoxin, one of the 'classical' secondary metabolites produced by fungi and that has antibacterial activity. The first step is performed by the polyketide synthase VdtA which condenses one acetyl-CoA and 6 malonyl-CoA units to form the heptaketide monomer backbone of viriditoxin. The product of VdtA is then O-methylated on C7 by the O-methyltransferase VdtC. The O-methyl group is important for the stereoselective coupling of the monomers at the final step of viriditoxin biosynthesis. The short-chain dehydrogenase/reductase VdtF then acts as a stereospecific reductase converting the pyrone to dihydropyrone via the reduction of the C3-C4 double bond. The FAD-binding monooxygenase VdtE then converts the ketone group into a methyl-ester group to yield semi-viriditoxin. Finally, the laccase VdtB is involved in dimerization of 2 semi-viriditoxin molecules to yield the final viriditoxin. VdtB is responsible for the regioselective 6,6'-coupling of semi-viriditoxin, which yields (M)-viriditoxin and (P)-viriditoxin at a ratio of 1:2. The non-catalytic carboxylesterase-like protein VdtD affects the stereochemistical outcome of the coupling. The highly reducing polyketide synthase VdtX is not involved in viriditoxin synthesis, but might possibly play a role in the production of additional metabolites not identified yet. This chain is FAD-binding monooxygenase VdtE, found in Byssochlamys spectabilis (Paecilomyces variotii).